Consider the following 101-residue polypeptide: Small ribosomal subunit protein uS14 (101 aa).

This sequence belongs to the universal ribosomal protein uS14 family. Part of the 30S ribosomal subunit. Contacts proteins S3 and S10.

Its function is as follows. Binds 16S rRNA, required for the assembly of 30S particles and may also be responsible for determining the conformation of the 16S rRNA at the A site. The sequence is that of Small ribosomal subunit protein uS14 from Brucella abortus (strain 2308).